A 119-amino-acid polypeptide reads, in one-letter code: Large ribosomal subunit protein bL19 (119 aa).

This sequence belongs to the bacterial ribosomal protein bL19 family.

Its function is as follows. This protein is located at the 30S-50S ribosomal subunit interface and may play a role in the structure and function of the aminoacyl-tRNA binding site. The chain is Large ribosomal subunit protein bL19 from Leuconostoc mesenteroides subsp. mesenteroides (strain ATCC 8293 / DSM 20343 / BCRC 11652 / CCM 1803 / JCM 6124 / NCDO 523 / NBRC 100496 / NCIMB 8023 / NCTC 12954 / NRRL B-1118 / 37Y).